The following is a 252-amino-acid chain: PF03932 family protein CutC (252 aa).

Belongs to the CutC family.

It localises to the cytoplasm. The polypeptide is PF03932 family protein CutC (Pectobacterium atrosepticum (strain SCRI 1043 / ATCC BAA-672) (Erwinia carotovora subsp. atroseptica)).